Here is a 66-residue protein sequence, read N- to C-terminus: Venom peptide CtAPI (66 aa).

5 disulfides stabilise this stretch: C7–C44, C16–C40, C20–C33, C24–C64, and C46–C58. The region spanning 7 to 64 (CEKDEEFVNCAPRCPQNCRNIRSYQPCLVLTPVCAPGCVCRSGKVKNDRGDCVSITDC) is the TIL domain.

The protein belongs to the serine protease inhibitor-like (TIL domain-containing) family. Expressed by the venom gland.

The protein localises to the secreted. Serine protease inhibitor. The sequence is that of Venom peptide CtAPI from Chaerilus tricostatus (Scorpion).